A 125-amino-acid chain; its full sequence is Large ribosomal subunit protein bL20 (125 aa).

The protein belongs to the bacterial ribosomal protein bL20 family.

Its function is as follows. Binds directly to 23S ribosomal RNA and is necessary for the in vitro assembly process of the 50S ribosomal subunit. It is not involved in the protein synthesizing functions of that subunit. The polypeptide is Large ribosomal subunit protein bL20 (Methylobacterium sp. (strain 4-46)).